The following is a 313-amino-acid chain: Probable alpha-L-glutamate ligase (313 aa).

The ATP-grasp domain maps to 112–294 (LQMLMAQGIA…IALQMIVHLE (183 aa)). ATP is bound by residues lysine 148, 185–186 (EF), aspartate 194, and 218–220 (RAN). Residues aspartate 255, glutamate 267, and asparagine 269 each contribute to the Mg(2+) site. Mn(2+) is bound by residues aspartate 255, glutamate 267, and asparagine 269.

It belongs to the RimK family. It depends on Mg(2+) as a cofactor. Requires Mn(2+) as cofactor.

The polypeptide is Probable alpha-L-glutamate ligase (Pasteurella multocida (strain Pm70)).